Consider the following 281-residue polypeptide: ATP phosphoribosyltransferase (281 aa).

The protein belongs to the ATP phosphoribosyltransferase family. Long subfamily. Requires Mg(2+) as cofactor.

The protein localises to the cytoplasm. The enzyme catalyses 1-(5-phospho-beta-D-ribosyl)-ATP + diphosphate = 5-phospho-alpha-D-ribose 1-diphosphate + ATP. It functions in the pathway amino-acid biosynthesis; L-histidine biosynthesis; L-histidine from 5-phospho-alpha-D-ribose 1-diphosphate: step 1/9. Its activity is regulated as follows. Feedback inhibited by histidine. In terms of biological role, catalyzes the condensation of ATP and 5-phosphoribose 1-diphosphate to form N'-(5'-phosphoribosyl)-ATP (PR-ATP). Has a crucial role in the pathway because the rate of histidine biosynthesis seems to be controlled primarily by regulation of HisG enzymatic activity. This is ATP phosphoribosyltransferase from Corynebacterium jeikeium (strain K411).